A 107-amino-acid chain; its full sequence is Thiosulfate sulfurtransferase GlpE (107 aa).

One can recognise a Rhodanese domain in the interval 19 to 107 (QDLNAVLVDI…WHKAGLPVEK (89 aa)). The active-site Cysteine persulfide intermediate is the Cys67.

The protein belongs to the GlpE family.

The protein resides in the cytoplasm. It carries out the reaction thiosulfate + hydrogen cyanide = thiocyanate + sulfite + 2 H(+). It catalyses the reaction thiosulfate + [thioredoxin]-dithiol = [thioredoxin]-disulfide + hydrogen sulfide + sulfite + 2 H(+). In terms of biological role, transferase that catalyzes the transfer of sulfur from thiosulfate to thiophilic acceptors such as cyanide or dithiols. May function in a CysM-independent thiosulfate assimilation pathway by catalyzing the conversion of thiosulfate to sulfite, which can then be used for L-cysteine biosynthesis. The sequence is that of Thiosulfate sulfurtransferase GlpE from Aliivibrio fischeri (strain MJ11) (Vibrio fischeri).